An 820-amino-acid chain; its full sequence is SART-1 family protein DOT2 (820 aa).

Basic and acidic residues-rich tracts occupy residues 1–156, 210–219, and 426–445; these read MEVE…DNRG, EEKRNAEKQR, and LGSR…ERIE. Disordered stretches follow at residues 1 to 177, 210 to 248, 420 to 445, 523 to 544, 564 to 617, 657 to 678, 729 to 748, and 762 to 820; these read MEVE…SALD, EEKR…EHLS, GLGA…ERIE, SSTN…ENTV, KPES…PDEN, KLVG…SKDR, KLKQ…RMRE, and GHVK…RPKP. The residue at position 22 (Ser22) is a Phosphoserine. 3 coiled-coil regions span residues 58 to 120, 171 to 235, and 433 to 510; these read RDKE…EKEK, KEAS…NLNQ, and RRQA…KEEA. The span at 525 to 543 shows a compositional bias: low complexity; it reads TNQTTDDNTTTGDETQENT. Basic and acidic residues predominate over residues 582-591; sequence VEVKEEHPDG. A compositionally biased stretch (acidic residues) spans 596 to 606; sequence NDTDMDAAEDS. 2 stretches are compositionally biased toward basic and acidic residues: residues 607–617 and 665–678; these read SDTKEITPDEN and DGGK…SKDR. 2 stretches are compositionally biased toward polar residues: residues 733-744 and 767-776; these read MKNSDTPSQSVQ and GQTSDPQSGF. Residues 792–807 are compositionally biased toward basic and acidic residues; it reads GDRKVEHFLGIKRKSE.

Belongs to the SNU66/SART1 family. In terms of tissue distribution, expressed in lateral root cap, columella, meristem and quiescent center (QC). Expressed in young leaves.

Its subcellular location is the nucleus. Its function is as follows. Plays a role in root, shoot and flower development. Probably required for normal root and shoot meristem organization and maintenance and the proper expression of PIN and PLT genes. Involved in leaf vasculature patterning. The sequence is that of SART-1 family protein DOT2 from Arabidopsis thaliana (Mouse-ear cress).